A 153-amino-acid chain; its full sequence is ORM1-like protein 3 (153 aa).

Residues 1–17 form an important for ceramide level-sensing region; it reads MNVGTAHSEVNPNTRVM. At 1-21 the chain is on the cytoplasmic side; it reads MNVGTAHSEVNPNTRVMNSRG. Transmembrane regions (helical) follow at residues 22 to 42 and 43 to 63; these read IWLS…SIPF and VSVP…MYIF. Over 64 to 94 the chain is Cytoplasmic; it reads LHTVKGTPFETPDQGKARLLTHWEQMDYGVQ. Residues 95 to 117 form a helical membrane-spanning segment; the sequence is FTASRKFLTITPIVLYFLTSFYT. Topologically, residues 118 to 121 are extracellular; sequence KYDQ. A helical transmembrane segment spans residues 122–142; sequence IHFVLNTVSLMSVLIPKLPQL. Hydroxyproline is present on Pro-137. Residues 143–153 lie on the Cytoplasmic side of the membrane; it reads HGVRIFGINKY.

It belongs to the ORM family. Ceramide-sensitive subunit of the serine palmitoyltransferase (SPT) complex, which is also composed of SPTLC1, SPTLC2/3 and SPTSSA/B. In terms of processing, when hydroxylated at Pro-137, ubiquitinated via 'Lys-48'-linkage, leading to proteasomal degradation. In endothelial cells, ORMDL3 proteasomal degradation is controlled by the sphingosine 1-phosphate receptor signaling pathway.

The protein localises to the endoplasmic reticulum membrane. Plays an essential role in the homeostatic regulation of sphingolipid de novo biosynthesis by modulating the activity of the serine palmitoyltransferase (SPT) in response to ceramide levels. When complexed to SPT, the binding of ceramides to its N-terminus stabilizes a conformation that block SPT substrate entry, hence preventing SPT catalytic activity. Through this mechanism, maintains ceramide levels at sufficient concentrations for the production of complex sphingolipids, but which prevents the accumulation of ceramides to levels that trigger apoptosis. In Ailuropoda melanoleuca (Giant panda), this protein is ORM1-like protein 3 (ORMDL3).